The primary structure comprises 91 residues: Small ribosomal subunit protein bS18 (91 aa).

The segment at 1-27 (MTQQSNTERKPRAKGPKRPRKPKVDPF) is disordered. Residues 11–21 (PRAKGPKRPRK) show a composition bias toward basic residues.

The protein belongs to the bacterial ribosomal protein bS18 family. As to quaternary structure, part of the 30S ribosomal subunit. Forms a tight heterodimer with protein bS6.

Functionally, binds as a heterodimer with protein bS6 to the central domain of the 16S rRNA, where it helps stabilize the platform of the 30S subunit. In Deinococcus geothermalis (strain DSM 11300 / CIP 105573 / AG-3a), this protein is Small ribosomal subunit protein bS18.